Consider the following 203-residue polypeptide: Amelogenin, Y isoform (203 aa).

Residues 1–16 (MGTWILFACLVGAAFA) form the signal peptide. The tract at residues 116–180 (MPVPGQQSMT…PPLPPMFPMR (65 aa)) is disordered. A compositionally biased stretch (polar residues) spans 120 to 130 (GQQSMTPTQHH). Low complexity predominate over residues 131–142 (QPNLPLPAQQPF). A compositionally biased stretch (pro residues) spans 143 to 180 (QPQPVQPLPHQPMQPQPPVQPMQPLLPQPPLPPMFPMR).

Belongs to the amelogenin family.

Its subcellular location is the secreted. The protein resides in the extracellular space. It localises to the extracellular matrix. Its function is as follows. Plays a role in biomineralization. Seems to regulate the formation of crystallites during the secretory stage of tooth enamel development. Thought to play a major role in the structural organization and mineralization of developing enamel. This chain is Amelogenin, Y isoform (AMELY), found in Pan troglodytes (Chimpanzee).